A 664-amino-acid polypeptide reads, in one-letter code: Bifunctional 3-dehydroquinate synthase/phosphatase (664 aa).

A 3-dehydroquinate synthase region spans residues 1 to 352 (MKKIFDDIYV…KIIDKYKNNF (352 aa)). Residues 61-66 (DGEEYK), 95-99 (GVICD), 119-120 (TS), Lys-132, Lys-141, and 159-162 (FLKT) contribute to the NAD(+) site. 3 residues coordinate Zn(2+): Glu-174, His-238, and His-255. The interval 353 to 664 (LRASIDIGTN…GAILEGVENK (312 aa)) is GPPA/PPX.

It in the N-terminal section; belongs to the sugar phosphate cyclases superfamily. Dehydroquinate synthase family. The protein in the C-terminal section; belongs to the GppA/Ppx family. Monomer. It depends on NAD(+) as a cofactor. Co(2+) is required as a cofactor. Requires Zn(2+) as cofactor.

The protein localises to the cytoplasm. It catalyses the reaction 7-phospho-2-dehydro-3-deoxy-D-arabino-heptonate = 3-dehydroquinate + phosphate. It functions in the pathway metabolic intermediate biosynthesis; chorismate biosynthesis; chorismate from D-erythrose 4-phosphate and phosphoenolpyruvate: step 2/7. In Fusobacterium nucleatum subsp. nucleatum (strain ATCC 25586 / DSM 15643 / BCRC 10681 / CIP 101130 / JCM 8532 / KCTC 2640 / LMG 13131 / VPI 4355), this protein is Bifunctional 3-dehydroquinate synthase/phosphatase (aroB).